We begin with the raw amino-acid sequence, 122 residues long: Large ribosomal subunit protein uL14 (122 aa).

This sequence belongs to the universal ribosomal protein uL14 family. In terms of assembly, part of the 50S ribosomal subunit. Forms a cluster with proteins L3 and L19. In the 70S ribosome, L14 and L19 interact and together make contacts with the 16S rRNA in bridges B5 and B8.

Its function is as follows. Binds to 23S rRNA. Forms part of two intersubunit bridges in the 70S ribosome. In Mycoplasma mobile (strain ATCC 43663 / 163K / NCTC 11711) (Mesomycoplasma mobile), this protein is Large ribosomal subunit protein uL14.